Reading from the N-terminus, the 121-residue chain is Immunoglobulin kappa variable 4-1 (121 aa).

The first 20 residues, 1 to 20, serve as a signal peptide directing secretion; the sequence is MVLQTQVFISLLLWISGAYG. A framework-1 region spans residues 21–43; sequence DIVMTQSPDSLAVSLGERATINC. The Ig-like domain maps to 21–121; that stretch reads DIVMTQSPDS…YYCQQYYSTP (101 aa). Cys-43 and Cys-114 are joined by a disulfide. The interval 44–60 is complementarity-determining-1; that stretch reads KSSQSVLYSSNNKNYLA. The tract at residues 61 to 75 is framework-2; sequence WYQQKPGQPPKLLIY. A complementarity-determining-2 region spans residues 76-82; the sequence is WASTRES. The segment at 83–114 is framework-3; the sequence is GVPDRFSGSGSGTDFTLTISSLQAEDVAVYYC. The interval 115–121 is complementarity-determining-3; sequence QQYYSTP.

As to quaternary structure, immunoglobulins are composed of two identical heavy chains and two identical light chains; disulfide-linked.

Its subcellular location is the secreted. The protein resides in the cell membrane. Its function is as follows. V segment of the variable domain of immunoglobulins light chain that participates in the antigen recognition. Immunoglobulins, also known as antibodies, are membrane-bound or secreted glycoproteins produced by B lymphocytes. In the recognition phase of humoral immunity, the membrane-bound immunoglobulins serve as receptors which, upon binding of a specific antigen, trigger the clonal expansion and differentiation of B lymphocytes into immunoglobulins-secreting plasma cells. Secreted immunoglobulins mediate the effector phase of humoral immunity, which results in the elimination of bound antigens. The antigen binding site is formed by the variable domain of one heavy chain, together with that of its associated light chain. Thus, each immunoglobulin has two antigen binding sites with remarkable affinity for a particular antigen. The variable domains are assembled by a process called V-(D)-J rearrangement and can then be subjected to somatic hypermutations which, after exposure to antigen and selection, allow affinity maturation for a particular antigen. This Homo sapiens (Human) protein is Immunoglobulin kappa variable 4-1.